The following is a 427-amino-acid chain: Glutamate-1-semialdehyde 2,1-aminomutase (427 aa).

Residue Lys-265 is modified to N6-(pyridoxal phosphate)lysine.

It belongs to the class-III pyridoxal-phosphate-dependent aminotransferase family. HemL subfamily. Homodimer. Pyridoxal 5'-phosphate serves as cofactor.

The protein resides in the cytoplasm. It carries out the reaction (S)-4-amino-5-oxopentanoate = 5-aminolevulinate. Its pathway is porphyrin-containing compound metabolism; protoporphyrin-IX biosynthesis; 5-aminolevulinate from L-glutamyl-tRNA(Glu): step 2/2. The chain is Glutamate-1-semialdehyde 2,1-aminomutase from Stutzerimonas stutzeri (strain A1501) (Pseudomonas stutzeri).